The primary structure comprises 327 residues: Flotillin-like protein FloA (327 aa).

The helical transmembrane segment at 2–22 (IGLIIIVVIVLVALLLLFSFV) threads the bilayer. The disordered stretch occupies residues 305–327 (ADTGMRNSINQRTNQKDDESPDK). Residues 318–327 (NQKDDESPDK) are compositionally biased toward basic and acidic residues.

This sequence belongs to the flotillin-like FloA family. As to quaternary structure, homooligomerizes.

It localises to the cell membrane. The protein resides in the membrane raft. Its function is as follows. Found in functional membrane microdomains (FMM) that may be equivalent to eukaryotic membrane rafts. FMMs are highly dynamic and increase in number as cells age. Flotillins are thought to be important factors in membrane fluidity. This chain is Flotillin-like protein FloA, found in Staphylococcus saprophyticus subsp. saprophyticus (strain ATCC 15305 / DSM 20229 / NCIMB 8711 / NCTC 7292 / S-41).